The sequence spans 256 residues: Ribonuclease HII (256 aa).

An RNase H type-2 domain is found at 67-255 (QLVGGVDEVG…VSEMVGLKKA (189 aa)). Asp73, Glu74, and Asp165 together coordinate a divalent metal cation.

It belongs to the RNase HII family. Mn(2+) serves as cofactor. Requires Mg(2+) as cofactor.

The protein resides in the cytoplasm. The catalysed reaction is Endonucleolytic cleavage to 5'-phosphomonoester.. Endonuclease that specifically degrades the RNA of RNA-DNA hybrids. The protein is Ribonuclease HII of Lactobacillus delbrueckii subsp. bulgaricus (strain ATCC 11842 / DSM 20081 / BCRC 10696 / JCM 1002 / NBRC 13953 / NCIMB 11778 / NCTC 12712 / WDCM 00102 / Lb 14).